A 149-amino-acid polypeptide reads, in one-letter code: MQILVHCIQKKDDDFDNIKEYIKMSSKWADIKDINKFNSQIAKAQSASKEQAHKAYDLAYEHCLNGYCIGLDEKGYHLDSVEFADLLKNSSQISFFIGGAYGLSPQFKTKMNRLISLSKMTLAHKIAKLMLFEQIFRGLCINANHPYHK.

Residues Leu-71, Gly-98, and 117–122 each bind S-adenosyl-L-methionine; that span reads LSKMTL.

The protein belongs to the RNA methyltransferase RlmH family. As to quaternary structure, homodimer.

The protein localises to the cytoplasm. It carries out the reaction pseudouridine(1915) in 23S rRNA + S-adenosyl-L-methionine = N(3)-methylpseudouridine(1915) in 23S rRNA + S-adenosyl-L-homocysteine + H(+). Functionally, specifically methylates the pseudouridine at position 1915 (m3Psi1915) in 23S rRNA. This chain is Ribosomal RNA large subunit methyltransferase H, found in Campylobacter fetus subsp. fetus (strain 82-40).